The following is a 271-amino-acid chain: Tryptophan synthase alpha chain (271 aa).

Residues glutamate 49 and aspartate 60 each act as proton acceptor in the active site.

Belongs to the TrpA family. Tetramer of two alpha and two beta chains.

The catalysed reaction is (1S,2R)-1-C-(indol-3-yl)glycerol 3-phosphate + L-serine = D-glyceraldehyde 3-phosphate + L-tryptophan + H2O. Its pathway is amino-acid biosynthesis; L-tryptophan biosynthesis; L-tryptophan from chorismate: step 5/5. The alpha subunit is responsible for the aldol cleavage of indoleglycerol phosphate to indole and glyceraldehyde 3-phosphate. The protein is Tryptophan synthase alpha chain of Rhizorhabdus wittichii (strain DSM 6014 / CCUG 31198 / JCM 15750 / NBRC 105917 / EY 4224 / RW1) (Sphingomonas wittichii).